We begin with the raw amino-acid sequence, 122 residues long: Large ribosomal subunit protein uL14 (122 aa).

Belongs to the universal ribosomal protein uL14 family. In terms of assembly, part of the 50S ribosomal subunit. Forms a cluster with proteins L3 and L19. In the 70S ribosome, L14 and L19 interact and together make contacts with the 16S rRNA in bridges B5 and B8.

Functionally, binds to 23S rRNA. Forms part of two intersubunit bridges in the 70S ribosome. This chain is Large ribosomal subunit protein uL14, found in Pelodictyon phaeoclathratiforme (strain DSM 5477 / BU-1).